We begin with the raw amino-acid sequence, 725 residues long: Catalase-peroxidase (725 aa).

The tryptophyl-tyrosyl-methioninium (Trp-Tyr) (with M-237) cross-link spans 88 to 211; it reads WHSAGTYRIQ…LAASEMGLIY (124 aa). His-89 functions as the Proton acceptor in the catalytic mechanism. The tryptophyl-tyrosyl-methioninium (Tyr-Met) (with W-88) cross-link spans 211 to 237; sequence YVNPEGPGREPDPLKAAQQIRETFKRM. His-252 is a binding site for heme b.

The protein belongs to the peroxidase family. Peroxidase/catalase subfamily. In terms of assembly, homodimer or homotetramer. Requires heme b as cofactor. Formation of the three residue Trp-Tyr-Met cross-link is important for the catalase, but not the peroxidase activity of the enzyme.

The catalysed reaction is H2O2 + AH2 = A + 2 H2O. The enzyme catalyses 2 H2O2 = O2 + 2 H2O. In terms of biological role, bifunctional enzyme with both catalase and broad-spectrum peroxidase activity. The protein is Catalase-peroxidase of Symbiobacterium thermophilum (strain DSM 24528 / JCM 14929 / IAM 14863 / T).